The following is a 511-amino-acid chain: Maturase K (511 aa).

Belongs to the intron maturase 2 family. MatK subfamily.

It is found in the plastid. Its subcellular location is the chloroplast. Its function is as follows. Usually encoded in the trnK tRNA gene intron. Probably assists in splicing its own and other chloroplast group II introns. The protein is Maturase K of Primula veris (Cowslip).